The chain runs to 219 residues: Small ribosomal subunit protein uS4 (219 aa).

The region spanning 112 to 174 is the S4 RNA-binding domain; sequence RRLQTQVLRL…GSSPLMSESH (63 aa). Residues 193 to 219 are disordered; that stretch reads KAAAEAKQARERPPERGGGRKKRGGRR. Basic and acidic residues predominate over residues 199–210; it reads KQARERPPERGG.

It belongs to the universal ribosomal protein uS4 family. In terms of assembly, part of the 30S ribosomal subunit. Contacts protein S5. The interaction surface between S4 and S5 is involved in control of translational fidelity.

In terms of biological role, one of the primary rRNA binding proteins, it binds directly to 16S rRNA where it nucleates assembly of the body of the 30S subunit. With S5 and S12 plays an important role in translational accuracy. The polypeptide is Small ribosomal subunit protein uS4 (Methanosarcina mazei (strain ATCC BAA-159 / DSM 3647 / Goe1 / Go1 / JCM 11833 / OCM 88) (Methanosarcina frisia)).